Consider the following 252-residue polypeptide: Large ribosomal subunit protein uL29m (252 aa).

The transit peptide at 1–39 (MSTSTVIRPVARSLLQLRKAGNTPPAFLLPCLQSSSTTS) directs the protein to the mitochondrion. Over residues 233–242 (EDVLAEAEGE) the composition is skewed to acidic residues. Positions 233 to 252 (EDVLAEAEGEAEPKPAQVTA) are disordered.

It belongs to the universal ribosomal protein uL29 family. As to quaternary structure, component of the mitochondrial large ribosomal subunit. Mature mitochondrial ribosomes consist of a small (37S) and a large (54S) subunit. The 37S subunit contains at least 33 different proteins and 1 molecule of RNA (15S). The 54S subunit contains at least 45 different proteins and 1 molecule of RNA (21S).

It is found in the mitochondrion. This is Large ribosomal subunit protein uL29m (mrpl4) from Botryotinia fuckeliana (strain B05.10) (Noble rot fungus).